Consider the following 375-residue polypeptide: Neuropeptide Y receptor type 4 (375 aa).

The Extracellular segment spans residues M1–E39. N-linked (GlcNAc...) asparagine glycosylation is found at N2, N19, and N29. Residues L40–L60 form a helical membrane-spanning segment. Residues C61–L78 lie on the Cytoplasmic side of the membrane. Residues L79–V99 traverse the membrane as a helical segment. Residues T100–M116 lie on the Extracellular side of the membrane. C114 and C201 form a disulfide bridge. A helical transmembrane segment spans residues L117–L137. At E138–Q155 the chain is on the cytoplasmic side. The helical transmembrane segment at A156 to A176 threads the bilayer. The Extracellular portion of the chain corresponds to N177 to R211. N187 carries N-linked (GlcNAc...) asparagine glycosylation. The chain crosses the membrane as a helical span at residues L212–V232. Topologically, residues C233–M266 are cytoplasmic. A helical membrane pass occupies residues L267 to L287. At E288 to N301 the chain is on the extracellular side. A helical transmembrane segment spans residues L302–Y322. Residues G323–I375 lie on the Cytoplasmic side of the membrane. The S-palmitoyl cysteine moiety is linked to residue C340.

The protein belongs to the G-protein coupled receptor 1 family. As to expression, heart, detected in small intestine.

It localises to the cell membrane. Its function is as follows. G protein-coupled receptor for PPY/pancreatic polypeptide/PP that is negatively coupled to cAMP. Has much lower affinity for the NPY/neuropeptide Y and PYY/peptide YY. The protein is Neuropeptide Y receptor type 4 (Npy4r) of Mus musculus (Mouse).